Reading from the N-terminus, the 205-residue chain is Holliday junction branch migration complex subunit RuvA (205 aa).

Residues 1-64 are domain I; it reads MIGKLKGTID…EDQLKLFGFM (64 aa). The segment at 65 to 143 is domain II; the sequence is SALEREWFNL…AFTGDAGSAI (79 aa). The tract at residues 144–153 is flexible linker; sequence GLKQELGEGV. Residues 153–205 form a domain III region; that stretch reads VASAPVSDAVSALTNLGYSRDQAANAIAAALKNGGEGADSAKLIRLGLKELSR.

It belongs to the RuvA family. As to quaternary structure, homotetramer. Forms an RuvA(8)-RuvB(12)-Holliday junction (HJ) complex. HJ DNA is sandwiched between 2 RuvA tetramers; dsDNA enters through RuvA and exits via RuvB. An RuvB hexamer assembles on each DNA strand where it exits the tetramer. Each RuvB hexamer is contacted by two RuvA subunits (via domain III) on 2 adjacent RuvB subunits; this complex drives branch migration. In the full resolvosome a probable DNA-RuvA(4)-RuvB(12)-RuvC(2) complex forms which resolves the HJ.

It localises to the cytoplasm. Its function is as follows. The RuvA-RuvB-RuvC complex processes Holliday junction (HJ) DNA during genetic recombination and DNA repair, while the RuvA-RuvB complex plays an important role in the rescue of blocked DNA replication forks via replication fork reversal (RFR). RuvA specifically binds to HJ cruciform DNA, conferring on it an open structure. The RuvB hexamer acts as an ATP-dependent pump, pulling dsDNA into and through the RuvAB complex. HJ branch migration allows RuvC to scan DNA until it finds its consensus sequence, where it cleaves and resolves the cruciform DNA. The protein is Holliday junction branch migration complex subunit RuvA of Allorhizobium ampelinum (strain ATCC BAA-846 / DSM 112012 / S4) (Agrobacterium vitis (strain S4)).